We begin with the raw amino-acid sequence, 208 residues long: Type 4 adapter protein LvgA (208 aa).

A disordered region spans residues 184-208; the sequence is GYGYPPESPRENYKHPVSSATTARK.

In terms of assembly, the T4BSS is a complex nanomachine composed of several subcomplexes. This subunit is part of the Type IV Coupling Complex (T4CC), a subcomplex composed of the DotLMNYZ core and the IcmSW-LvgA adapter subunits, linked by the C-terminal tail of DotL.

The protein resides in the cytoplasm. Functionally, component of the Dot/Icm type IVB secretion system (T4BSS), which is used to inject bacterial effector proteins into eukaryotic host cells. Part of a subcomplex which recruits effector proteins and delivers them to the core transmembrane subcomplex. Is a critical subunit for binding a subset of effector proteins. Recognizes more than one type of binding motif. May be a critical factor that confers host specificity. Necessary for full virulence of the bacterium in guinea pigs and presumably humans. The polypeptide is Type 4 adapter protein LvgA (Legionella pneumophila).